The chain runs to 211 residues: Glutathione S-transferase class-mu 28 kDa isozyme (211 aa).

The 83-residue stretch at 4–86 (DHIKVIYFNG…YMAKKHHMMG (83 aa)) folds into the GST N-terminal domain. Glutathione-binding residues include Y10, R16, W41, K45, L53, E70, S71, and D104. A GST C-terminal domain is found at 88–211 (TDEEYYNVEK…YLSDRAATPF (124 aa)).

This sequence belongs to the GST superfamily. Mu family. In terms of assembly, homodimer.

The enzyme catalyses RX + glutathione = an S-substituted glutathione + a halide anion + H(+). In terms of biological role, conjugation of reduced glutathione to a wide number of exogenous and endogenous hydrophobic electrophiles. Functionally, GST isoenzymes appear to play a central role in the parasite detoxification system. Other functions are also suspected including a role in increasing the solubility of haematin in the parasite gut. The protein is Glutathione S-transferase class-mu 28 kDa isozyme of Schistosoma bovis (Blood fluke).